Reading from the N-terminus, the 833-residue chain is pre-rRNA 2'-O-ribose RNA methyltransferase (833 aa).

S-adenosyl-L-methionine contacts are provided by G57, W59, D77, D93, and D118. The active-site Proton acceptor is the K158. Disordered stretches follow at residues 323–349 (KLDNPDEEETEKPEEKKELTAEEMEEN), 363–453 (KKKR…DEYL), 475–640 (LDDV…SDED), 730–767 (LGKKMEKTRDKASSIVDNPEMSNREKSKAIEKLYSGTD), and 779–833 (IAKK…KNKK). Positions 336–386 (EEKKELTAEEMEENLQEEMKEYLALVEKKKRKEKKRQNELKRKHQRKIELT) form a coiled coil. Positions 363–381 (KKKRKEKKRQNELKRKHQR) are enriched in basic residues. Residues 382–396 (KIELTMHIPGDKIEE) show a composition bias toward basic and acidic residues. Residues 423 to 441 (SSDEFDSDDSDDDDDDDNN) are compositionally biased toward acidic residues. A coiled-coil region spans residues 455–485 (QQLDEQYKLYQQRIRKKAAKLDDVKVKKDKI). Over residues 475–486 (LDDVKVKKDKIG) the composition is skewed to basic and acidic residues. Composition is skewed to acidic residues over residues 490 to 503 (YNEDDEEFVEEQEE) and 542 to 556 (SESEPEQDGDDDQDD). Residues 557–566 (ENNKPIDISK) are compositionally biased toward basic and acidic residues. Acidic residues-rich tracts occupy residues 605–614 (DKDDQDDDDD) and 626–640 (PVQEEVEYESDSDED). Composition is skewed to basic and acidic residues over residues 732–741 (KKMEKTRDKA), 751–767 (SNREKSKAIEKLYSGTD), and 794–806 (KIVDKRMKKDLRA).

The protein belongs to the class I-like SAM-binding methyltransferase superfamily. RNA methyltransferase RlmE family. SPB1 subfamily.

The protein resides in the nucleus. It localises to the nucleolus. It carries out the reaction a ribonucleotide in rRNA + S-adenosyl-L-methionine = a 2'-O-methylribonucleotide in rRNA + S-adenosyl-L-homocysteine + H(+). In terms of biological role, RNA 2'-O-methyltransferase involved in the maturation of rRNA and in the biogenesis of ribosomal subunits. The sequence is that of pre-rRNA 2'-O-ribose RNA methyltransferase (fsjC) from Dictyostelium discoideum (Social amoeba).